A 509-amino-acid chain; its full sequence is Maturase K (509 aa).

This sequence belongs to the intron maturase 2 family. MatK subfamily.

It is found in the plastid. The protein resides in the chloroplast. Its function is as follows. Usually encoded in the trnK tRNA gene intron. Probably assists in splicing its own and other chloroplast group II introns. The polypeptide is Maturase K (Clematis ligusticifolia (Western white clematis)).